A 163-amino-acid chain; its full sequence is Peptidyl-prolyl cis-trans isomerase-like 1 (163 aa).

Residues 1-155 enclose the PPIase cyclophilin-type domain; that stretch reads MATDVAVETT…TEVKIVKARV (155 aa).

It belongs to the cyclophilin-type PPIase family. PPIL1 subfamily.

The catalysed reaction is [protein]-peptidylproline (omega=180) = [protein]-peptidylproline (omega=0). In terms of biological role, PPIases accelerate the folding of proteins. It catalyzes the cis-trans isomerization of proline imidic peptide bonds in oligopeptides. The sequence is that of Peptidyl-prolyl cis-trans isomerase-like 1 (ppi-1) from Neurospora crassa (strain ATCC 24698 / 74-OR23-1A / CBS 708.71 / DSM 1257 / FGSC 987).